The primary structure comprises 860 residues: Leucine--tRNA ligase (860 aa).

The short motif at 42–52 (PYPSGRLHMGH) is the 'HIGH' region element. The 'KMSKS' region motif lies at 619–623 (KMSKS). Lys622 is an ATP binding site.

Belongs to the class-I aminoacyl-tRNA synthetase family.

It localises to the cytoplasm. The enzyme catalyses tRNA(Leu) + L-leucine + ATP = L-leucyl-tRNA(Leu) + AMP + diphosphate. The polypeptide is Leucine--tRNA ligase (Yersinia pseudotuberculosis serotype I (strain IP32953)).